A 98-amino-acid chain; its full sequence is Keratin-associated protein 3-3 (98 aa).

N-acetylalanine is present on Ala2. 3 consecutive repeat copies span residues 3–7 (CCAPL), 8–12 (CCSAR), and 47–51 (CCDNC). The interval 3–59 (CCAPLCCSARTSPATTICSSDKFCRCGVCLPSTCPHTVWLLEPTCCDNCPPPCHIPQ) is 3 X 5 AA repeats of C-C-X(3).

This sequence belongs to the KRTAP type 3 family. In terms of assembly, interacts with hair keratins.

Its function is as follows. In the hair cortex, hair keratin intermediate filaments are embedded in an interfilamentous matrix, consisting of hair keratin-associated proteins (KRTAP), which are essential for the formation of a rigid and resistant hair shaft through their extensive disulfide bond cross-linking with abundant cysteine residues of hair keratins. The matrix proteins include the high-sulfur and high-glycine-tyrosine keratins. This is Keratin-associated protein 3-3 from Bos taurus (Bovine).